Consider the following 238-residue polypeptide: SPbeta prophage-derived uncharacterized protein YorM (238 aa).

An N-terminal signal peptide occupies residues 1-37; sequence MFKKLIDKHKKYVYHRINKMALFATIGLLGVGLVYSA. Positions 111 to 121 are enriched in basic residues; sequence TKTKKVQKTNT. Residues 111-132 are disordered; it reads TKTKKVQKTNTKRNLDKAVSKS.

The protein is SPbeta prophage-derived uncharacterized protein YorM (yorM) of Bacillus subtilis (strain 168).